A 257-amino-acid chain; its full sequence is Protein vip1 (257 aa).

In terms of domain architecture, RRM spans 3–76; that stretch reads NQVIVTNISP…NKIQITSEDG (74 aa). The disordered stretch occupies residues 74–99; sequence EDGGAASTTDQGGAGGDQAARQEDKP. The span at 75–84 shows a compositional bias: low complexity; it reads DGGAASTTDQ. Phosphoserine occurs at positions 132 and 177. Residues 217–257 form a disordered region; the sequence is ARRLADAKNQAEGTASPASSTPTAPAEKEPTAPTTESKTTE. T230 bears the Phosphothreonine mark. Low complexity predominate over residues 230–257; that stretch reads TASPASSTPTAPAEKEPTAPTTESKTTE. S232 and S235 each carry phosphoserine.

This Schizosaccharomyces pombe (strain 972 / ATCC 24843) (Fission yeast) protein is Protein vip1 (vip1).